The primary structure comprises 227 residues: UPF0173 metal-dependent hydrolase Bcer98_3294 (227 aa).

It belongs to the UPF0173 family.

This chain is UPF0173 metal-dependent hydrolase Bcer98_3294, found in Bacillus cytotoxicus (strain DSM 22905 / CIP 110041 / 391-98 / NVH 391-98).